A 43-amino-acid chain; its full sequence is Photosystem I reaction center subunit IX (43 aa).

The helical transmembrane segment at 7 to 27 (YLSVAPVLSTLWFGSLAGLLI) threads the bilayer.

This sequence belongs to the PsaJ family.

It is found in the plastid. The protein localises to the chloroplast thylakoid membrane. Its function is as follows. May help in the organization of the PsaE and PsaF subunits. The sequence is that of Photosystem I reaction center subunit IX from Aethionema cordifolium (Lebanon stonecress).